The sequence spans 628 residues: RING finger protein 112 (628 aa).

An RING-type zinc finger spans residues cysteine 57–arginine 98. Residues alanine 132–glutamate 628 form an interaction with ZBTB16 region. The GB1/RHD3-type G domain maps to aspartate 167 to arginine 409. Residue arginine 318–aspartate 319 participates in GTP binding. Transmembrane regions (helical) follow at residues leucine 544–glycine 564 and glycine 577–valine 597.

This sequence belongs to the TRAFAC class dynamin-like GTPase superfamily. GB1/RHD3 GTPase family. GB1 subfamily. As to quaternary structure, self-associates. Interacts with SP1 in an oxidative stress-regulated manner. Interacts with SIGMAR1 in an oxidative stress-regulated manner. Interacts with ZBTB16 (via C2H2-type zinc finger domains 1 and 2). Post-translationally, auto-ubiquitinated.

The protein resides in the membrane. The protein localises to the cytoplasm. It is found in the nucleus. It localises to the nuclear body. Its subcellular location is the nucleoplasm. The protein resides in the endosome. The protein localises to the cytoplasmic vesicle. It is found in the secretory vesicle. It localises to the synaptic vesicle. Its subcellular location is the postsynaptic density. The protein resides in the perikaryon. The protein localises to the cell projection. It is found in the neuron projection. The enzyme catalyses S-ubiquitinyl-[E2 ubiquitin-conjugating enzyme]-L-cysteine + [acceptor protein]-L-lysine = [E2 ubiquitin-conjugating enzyme]-L-cysteine + N(6)-ubiquitinyl-[acceptor protein]-L-lysine.. The protein operates within protein modification; protein ubiquitination. Functionally, E3 ubiquitin-protein ligase that plays an important role in neuronal differentiation, including neurogenesis and gliogenesis, during brain development. During embryonic development initiates neuronal differentiation by inducing cell cycle arrest at the G0/G1 phase through up-regulation of cell-cycle regulatory proteins. Plays a role not only in the fetal period during the development of the nervous system, but also in the adult brain, where it is involved in the maintenance of neural functions and protection of the nervous tissue cells from oxidative stress-induced damage. Exhibits GTPase and E3 ubiquitin-protein ligase activities. Regulates dendritic spine density and synaptic neurotransmission; its ability to hydrolyze GTP is involved in the maintenance of dendritic spine density. The sequence is that of RING finger protein 112 (RNF112) from Bos taurus (Bovine).